The primary structure comprises 488 residues: N-succinylglutamate 5-semialdehyde dehydrogenase 2 (488 aa).

Glycine 221–glycine 226 lines the NAD(+) pocket. Residues glutamate 244 and cysteine 278 contribute to the active site.

Belongs to the aldehyde dehydrogenase family. AstD subfamily.

It carries out the reaction N-succinyl-L-glutamate 5-semialdehyde + NAD(+) + H2O = N-succinyl-L-glutamate + NADH + 2 H(+). Its pathway is amino-acid degradation; L-arginine degradation via AST pathway; L-glutamate and succinate from L-arginine: step 4/5. Catalyzes the NAD-dependent reduction of succinylglutamate semialdehyde into succinylglutamate. This Pseudoalteromonas translucida (strain TAC 125) protein is N-succinylglutamate 5-semialdehyde dehydrogenase 2.